A 383-amino-acid polypeptide reads, in one-letter code: uncharacterized protein (383 aa).

It belongs to the peptidase M20 family.

This is an uncharacterized protein from Staphylococcus aureus (strain USA300).